Consider the following 262-residue polypeptide: Aquaporin TIP3-1 (262 aa).

Transmembrane regions (helical) follow at residues 27–47 and 61–81; these read AAISEFIATAIFVFAAEGSVL and GLVAVALAHALALAVAVAVAV. An NPA 1 motif is present at residues 89–91; the sequence is NPA. Helical transmembrane passes span 104–124, 148–168, and 175–195; these read LVRAVLYWVAQLLGAVAATLL, AVLLEAVMTFGLMYAYYATVI, and VGTIAPLAVGFLLGANVLAGG. Positions 203-205 match the NPA 2 motif; sequence NPA. Residues 223-243 form a helical membrane-spanning segment; it reads YWLGPFLGAGLAGLVYEYLVI.

Belongs to the MIP/aquaporin (TC 1.A.8) family. TIP (TC 1.A.8.10) subfamily.

It is found in the vacuole membrane. In terms of biological role, aquaporins facilitate the transport of water and small neutral solutes across cell membranes. The protein is Aquaporin TIP3-1 (TIP3-1) of Zea mays (Maize).